The sequence spans 352 residues: UDP-N-acetylglucosamine--N-acetylmuramyl-(pentapeptide) pyrophosphoryl-undecaprenol N-acetylglucosamine transferase (352 aa).

UDP-N-acetyl-alpha-D-glucosamine is bound by residues 14-16 (TGG), N124, R164, S185, and Q285.

The protein belongs to the glycosyltransferase 28 family. MurG subfamily.

Its subcellular location is the cell inner membrane. The enzyme catalyses di-trans,octa-cis-undecaprenyl diphospho-N-acetyl-alpha-D-muramoyl-L-alanyl-D-glutamyl-meso-2,6-diaminopimeloyl-D-alanyl-D-alanine + UDP-N-acetyl-alpha-D-glucosamine = di-trans,octa-cis-undecaprenyl diphospho-[N-acetyl-alpha-D-glucosaminyl-(1-&gt;4)]-N-acetyl-alpha-D-muramoyl-L-alanyl-D-glutamyl-meso-2,6-diaminopimeloyl-D-alanyl-D-alanine + UDP + H(+). It functions in the pathway cell wall biogenesis; peptidoglycan biosynthesis. Functionally, cell wall formation. Catalyzes the transfer of a GlcNAc subunit on undecaprenyl-pyrophosphoryl-MurNAc-pentapeptide (lipid intermediate I) to form undecaprenyl-pyrophosphoryl-MurNAc-(pentapeptide)GlcNAc (lipid intermediate II). In Chlamydia trachomatis serovar A (strain ATCC VR-571B / DSM 19440 / HAR-13), this protein is UDP-N-acetylglucosamine--N-acetylmuramyl-(pentapeptide) pyrophosphoryl-undecaprenol N-acetylglucosamine transferase.